Reading from the N-terminus, the 488-residue chain is Probable apyrase 5 (488 aa).

The segment at 1–26 (MDALKVQILPDNQSSPSSTHMLTKPK) is disordered. Over 1–32 (MDALKVQILPDNQSSPSSTHMLTKPKSKKATK) the chain is Cytoplasmic. Over residues 10–21 (PDNQSSPSSTHM) the composition is skewed to polar residues. Residues 33–53 (SIAMLIVASLAITLGLLFVFS) form a helical; Signal-anchor for type II membrane protein membrane-spanning segment. At 54–488 (SNSVMFSASF…GKSRKMIGFK (435 aa)) the chain is on the extracellular side. Residue 73 to 83 (VIIDAGSSGTR) coordinates ATP. E196 (proton acceptor) is an active-site residue. Residue 220–230 (GIVELGGASAQ) coordinates ATP. N251 carries an N-linked (GlcNAc...) asparagine glycan.

This sequence belongs to the GDA1/CD39 NTPase family. The cofactor is Ca(2+). Highly expressed in young rosette leaves but only weakly in roots.

It localises to the membrane. It carries out the reaction a ribonucleoside 5'-triphosphate + 2 H2O = a ribonucleoside 5'-phosphate + 2 phosphate + 2 H(+). Functionally, catalyzes the hydrolysis of phosphoanhydride bonds of nucleoside tri- and di-phosphates. This is Probable apyrase 5 (APY5) from Arabidopsis thaliana (Mouse-ear cress).